The primary structure comprises 1714 residues: Collagen alpha-1(XXIV) chain (1714 aa).

An N-terminal signal peptide occupies residues 1-35 (MHLRAHRTRRGKVSPTAKTKSLLHFIVLCVAGVVV). The 77-residue stretch at 141 to 217 (KLVVHIRGKQ…MNNNSIHFEG (77 aa)) folds into the Laminin G-like domain. 3 N-linked (GlcNAc...) asparagine glycosylation sites follow: Asn-155, Asn-321, and Asn-376. Collagen-like domains are found at residues 487–542 (LRGP…PGFS), 552–611 (GDQG…EGNP), 660–719 (GPAG…KGEQ), 741–797 (GPPG…RGPP), 798–857 (GPPG…TGPV), 858–887 (GLPG…QGEK), 888–947 (GVMG…KGEK), 948–1007 (GDQG…PGEM), 1011–1052 (GPPG…PGAP), 1053–1112 (GEEG…PGQR), 1116–1170 (GKKG…GIPG), 1172–1196 (RGHQ…PGED), 1201–1249 (GPPG…GEPG), 1252–1306 (GEQG…GNPG), 1309–1353 (GPPG…QGPK), 1354–1413 (GEQG…EGDA), and 1420–1479 (GPKG…PGPR). The segment at 487 to 1481 (LRGPKGDTGP…PPGAPGPRKQ (995 aa)) is disordered. Residues 496 to 505 (PPGPPGPAGI) show a composition bias toward pro residues. 2 stretches are compositionally biased toward low complexity: residues 574–587 (HPGL…QGIP) and 685–701 (SVGP…PGPM). A compositionally biased stretch (pro residues) spans 893–902 (PGPPGVPGPI). The span at 985-1019 (DRGLPGEPGLRGLQGDVGPPGEMGMEGPPGTEGES) shows a compositional bias: low complexity. Gly residues-rich tracts occupy residues 1035–1044 (GSVGGTGEPG) and 1065–1074 (GVPGGRGLPG). Low complexity-rich tracts occupy residues 1132-1145 (SRGP…SGPK) and 1174-1186 (HQGQ…LPGP). Residues 1256–1266 (LKGERGSEGNK) are compositionally biased toward basic and acidic residues. Low complexity predominate over residues 1271 to 1293 (APGPSGKPGIPGLQGLLGPKGIQ). Residues 1318–1327 (GIRGGPGRTG) show a composition bias toward gly residues. Residues 1466–1476 (QPGPPGPPGAP) are compositionally biased toward pro residues. The 200-residue stretch at 1515–1714 (EEIFKTLNYL…YIDSSSVCFL (200 aa)) folds into the Fibrillar collagen NC1 domain.

The protein belongs to the fibrillar collagen family.

It localises to the secreted. It is found in the extracellular space. The protein resides in the extracellular matrix. In terms of biological role, may participate in regulating type I collagen fibrillogenesis at specific anatomical locations during fetal development. The protein is Collagen alpha-1(XXIV) chain (COL24A1) of Homo sapiens (Human).